The sequence spans 129 residues: ATP synthase epsilon chain (129 aa).

The protein belongs to the ATPase epsilon chain family. In terms of assembly, F-type ATPases have 2 components, CF(1) - the catalytic core - and CF(0) - the membrane proton channel. CF(1) has five subunits: alpha(3), beta(3), gamma(1), delta(1), epsilon(1). CF(0) has three main subunits: a, b and c.

It localises to the cell inner membrane. Its function is as follows. Produces ATP from ADP in the presence of a proton gradient across the membrane. The protein is ATP synthase epsilon chain of Campylobacter concisus (strain 13826).